We begin with the raw amino-acid sequence, 130 residues long: MAREKAASRKKKERKNILNGIAHIRSTFNNTIVTITDASGNAISWSSAGSQGFKGSRKSTPFAAQVAAEIAAKKAMEHGVQNIEVYVKGPGSGREAALRALQAAGFNITVIKDVTPIPHNGCRPPKRRRV.

This sequence belongs to the universal ribosomal protein uS11 family. In terms of assembly, part of the 30S ribosomal subunit. Interacts with proteins S7 and S18. Binds to IF-3.

Its function is as follows. Located on the platform of the 30S subunit, it bridges several disparate RNA helices of the 16S rRNA. Forms part of the Shine-Dalgarno cleft in the 70S ribosome. The sequence is that of Small ribosomal subunit protein uS11 from Syntrophobacter fumaroxidans (strain DSM 10017 / MPOB).